The following is a 185-amino-acid chain: Ribosome maturation factor RimM (185 aa).

The 80-residue stretch at 106 to 185 folds into the PRC barrel domain; the sequence is EGDYYWKDLM…SIEVDWDPGF (80 aa).

This sequence belongs to the RimM family. Binds ribosomal protein uS19.

Its subcellular location is the cytoplasm. In terms of biological role, an accessory protein needed during the final step in the assembly of 30S ribosomal subunit, possibly for assembly of the head region. Essential for efficient processing of 16S rRNA. May be needed both before and after RbfA during the maturation of 16S rRNA. It has affinity for free ribosomal 30S subunits but not for 70S ribosomes. This is Ribosome maturation factor RimM from Shigella dysenteriae serotype 1 (strain Sd197).